Consider the following 123-residue polypeptide: MLNKTSRKEQRERRRIRVRKKITGTRECPRLNVFRSARHIYAQLVDDERGVTLCAASTLLPELKERLGDGGGKIGVARAVGEMIAEKAKSLGIERVVFDRAGYLYHGRVKALAEGARAKGLEF.

Belongs to the universal ribosomal protein uL18 family. In terms of assembly, part of the 50S ribosomal subunit; part of the 5S rRNA/L5/L18/L25 subcomplex. Contacts the 5S and 23S rRNAs.

In terms of biological role, this is one of the proteins that bind and probably mediate the attachment of the 5S RNA into the large ribosomal subunit, where it forms part of the central protuberance. This is Large ribosomal subunit protein uL18 from Desulforudis audaxviator (strain MP104C).